The chain runs to 201 residues: Recombination protein RecR (201 aa).

The segment at 57–72 (CRSCRTFTEEDECNIC) adopts a C4-type zinc-finger fold. Positions 81–176 (GQLCVVEMPE…KVTRIAHGIP (96 aa)) constitute a Toprim domain.

This sequence belongs to the RecR family.

May play a role in DNA repair. It seems to be involved in an RecBC-independent recombinational process of DNA repair. It may act with RecF and RecO. This Actinobacillus pleuropneumoniae serotype 5b (strain L20) protein is Recombination protein RecR.